The chain runs to 324 residues: tRNA U34 carboxymethyltransferase (324 aa).

Carboxy-S-adenosyl-L-methionine is bound by residues lysine 91, tryptophan 105, lysine 110, glycine 130, 152 to 154 (DPS), 181 to 182 (IE), methionine 196, tyrosine 200, and arginine 315.

This sequence belongs to the class I-like SAM-binding methyltransferase superfamily. CmoB family. In terms of assembly, homotetramer.

The enzyme catalyses carboxy-S-adenosyl-L-methionine + 5-hydroxyuridine(34) in tRNA = 5-carboxymethoxyuridine(34) in tRNA + S-adenosyl-L-homocysteine + H(+). Its function is as follows. Catalyzes carboxymethyl transfer from carboxy-S-adenosyl-L-methionine (Cx-SAM) to 5-hydroxyuridine (ho5U) to form 5-carboxymethoxyuridine (cmo5U) at position 34 in tRNAs. This chain is tRNA U34 carboxymethyltransferase, found in Aliivibrio fischeri (strain MJ11) (Vibrio fischeri).